The following is a 263-amino-acid chain: 3-deoxy-manno-octulosonate cytidylyltransferase (263 aa).

The protein belongs to the KdsB family.

Its subcellular location is the cytoplasm. It catalyses the reaction 3-deoxy-alpha-D-manno-oct-2-ulosonate + CTP = CMP-3-deoxy-beta-D-manno-octulosonate + diphosphate. Its pathway is nucleotide-sugar biosynthesis; CMP-3-deoxy-D-manno-octulosonate biosynthesis; CMP-3-deoxy-D-manno-octulosonate from 3-deoxy-D-manno-octulosonate and CTP: step 1/1. It functions in the pathway bacterial outer membrane biogenesis; lipopolysaccharide biosynthesis. Activates KDO (a required 8-carbon sugar) for incorporation into bacterial lipopolysaccharide in Gram-negative bacteria. This Burkholderia cenocepacia (strain ATCC BAA-245 / DSM 16553 / LMG 16656 / NCTC 13227 / J2315 / CF5610) (Burkholderia cepacia (strain J2315)) protein is 3-deoxy-manno-octulosonate cytidylyltransferase.